The sequence spans 1137 residues: Morphogenesis-related protein MSB1 (1137 aa).

Disordered regions lie at residues 1–59 and 483–520; these read MNDM…NSMD and QLKKKTSAQSPTTEKELPPDDFELEDPPLSKSPTLSQT. The segment covering 21-50 has biased composition (polar residues); it reads SNSPKKAQKTNLSPNKNQNNEKNVPRSNGR. A Phosphoserine modification is found at serine 538. Disordered stretches follow at residues 577–620, 736–799, and 814–871; these read LNNL…EERV, STNT…SDSK, and AVSP…PQFS. The segment covering 593–608 has biased composition (basic and acidic residues); that stretch reads FEEKSKDAPIREEYHT. Residues 736–749 show a composition bias toward polar residues; it reads STNTNDSCADSSKY. The segment covering 750–769 has biased composition (basic and acidic residues); it reads TADRKLAEPRKISEESKVND. Over residues 770–796 the composition is skewed to polar residues; sequence DSSSYYSPNINNLPASRMPSQPTYSNS. Phosphoserine is present on residues serine 776 and serine 816.

Its function is as follows. May play a role in polarity establishment and bud formation. The MSB1 gene may be functionally redundant. In Saccharomyces cerevisiae (strain ATCC 204508 / S288c) (Baker's yeast), this protein is Morphogenesis-related protein MSB1 (MSB1).